A 196-amino-acid polypeptide reads, in one-letter code: RNA annealing protein YRA2 (196 aa).

Disordered regions lie at residues 1 to 63 (MSVD…PTHQ) and 143 to 196 (DSTR…MNGN). Residues 63-137 (QRVRFLNIPL…AKITVEIFEQ (75 aa)) form the RRM domain. Positions 149–159 (RSTDHVEKEAG) are enriched in basic and acidic residues.

This sequence belongs to the YRA1 family. As to quaternary structure, associates with mRNPs.

The protein localises to the nucleus. Involved in export of poly(A) mRNAs from the nucleus. Recruited to the coding sequences as well as poly-A sites of active genes. In Eremothecium gossypii (strain ATCC 10895 / CBS 109.51 / FGSC 9923 / NRRL Y-1056) (Yeast), this protein is RNA annealing protein YRA2 (YRA2).